Reading from the N-terminus, the 323-residue chain is Isoeugenol synthase 1 (323 aa).

NADP(+) is bound by residues 14-17 (TGYL), 36-47 (VMPLKKNSDDSK), 88-90 (VPQ), 113-115 (SEF), Lys135, and 155-157 (NSL). Catalysis depends on Lys135, which acts as the Proton donor/acceptor.

This sequence belongs to the NmrA-type oxidoreductase family. As to expression, expressed in flowers, especially in corolla and tubes of petals, probably in both epidermal and mesophyll cell layers.

It carries out the reaction (E)-isoeugenol + acetate + NADP(+) = (E)-coniferyl acetate + NADPH. Its pathway is aromatic compound metabolism; phenylpropanoid biosynthesis. With respect to regulation, inhibited by zinc and copper ions. Repressed by 4-bromo-cinnamyl acetate. Involved in the biosynthesis of the floral volatile isoeugenol. Catalyzes the synthesis of the phenylpropene isoeugenol from coniferyl acetate. Phenylpropenes are the primary constituents of various essential plant oils. They are produced as antimicrobial and antianimal compounds, or as floral attractants of pollinators. Isoeugenol is a characteristic aromatic constituent of spices and a floral volatile compound. In Petunia hybrida (Petunia), this protein is Isoeugenol synthase 1.